The sequence spans 365 residues: UDP-N-acetylglucosamine--N-acetylmuramyl-(pentapeptide) pyrophosphoryl-undecaprenol N-acetylglucosamine transferase (365 aa).

Residues 10 to 12 (TGG), N128, R170, S199, I250, and Q295 contribute to the UDP-N-acetyl-alpha-D-glucosamine site.

Belongs to the glycosyltransferase 28 family. MurG subfamily.

Its subcellular location is the cell inner membrane. The catalysed reaction is di-trans,octa-cis-undecaprenyl diphospho-N-acetyl-alpha-D-muramoyl-L-alanyl-D-glutamyl-meso-2,6-diaminopimeloyl-D-alanyl-D-alanine + UDP-N-acetyl-alpha-D-glucosamine = di-trans,octa-cis-undecaprenyl diphospho-[N-acetyl-alpha-D-glucosaminyl-(1-&gt;4)]-N-acetyl-alpha-D-muramoyl-L-alanyl-D-glutamyl-meso-2,6-diaminopimeloyl-D-alanyl-D-alanine + UDP + H(+). Its pathway is cell wall biogenesis; peptidoglycan biosynthesis. Functionally, cell wall formation. Catalyzes the transfer of a GlcNAc subunit on undecaprenyl-pyrophosphoryl-MurNAc-pentapeptide (lipid intermediate I) to form undecaprenyl-pyrophosphoryl-MurNAc-(pentapeptide)GlcNAc (lipid intermediate II). The sequence is that of UDP-N-acetylglucosamine--N-acetylmuramyl-(pentapeptide) pyrophosphoryl-undecaprenol N-acetylglucosamine transferase from Chlorobium luteolum (strain DSM 273 / BCRC 81028 / 2530) (Pelodictyon luteolum).